A 210-amino-acid chain; its full sequence is Protein RFS1 (210 aa).

The region spanning 4–203 (VAILIYSVDD…RVHQLQGKAF (200 aa)) is the Flavodoxin-like domain.

It belongs to the WrbA family.

It localises to the cytoplasm. Its subcellular location is the membrane raft. This Saccharomyces cerevisiae (strain ATCC 204508 / S288c) (Baker's yeast) protein is Protein RFS1 (RFS1).